Consider the following 445-residue polypeptide: uncharacterized protein (445 aa).

His-66 provides a ligand contact to Zn(2+). The Proton acceptor role is filled by Glu-69. Residues His-70 and Glu-146 each contribute to the Zn(2+) site. The interval 232 to 251 (GRQSAPPRKSTGRINGGPAL) is disordered.

This sequence belongs to the peptidase M16 family. Requires Zn(2+) as cofactor.

This is an uncharacterized protein from Mycobacterium leprae (strain TN).